We begin with the raw amino-acid sequence, 574 residues long: Membralin (574 aa).

The interval 1-27 is disordered; that stretch reads MSEHAAAPGPGPNGGGGGGAAPVRGPR. At Ser-2 the chain carries N-acetylserine. Residues 69 to 89 traverse the membrane as a helical segment; it reads FFVLLKALFVLFVLAYIHIVF. Asn-180 carries an N-linked (GlcNAc...) asparagine glycan. Helical transmembrane passes span 293-313, 337-357, and 417-437; these read TSYLAAFVIMVIFTLSVSMLL, IAFPAAPLLTVILALVGMEAI, and YSSLALVTSWLFIQHSMIYFF. Low complexity-rich tracts occupy residues 461–470 and 491–501; these read LGPGTPTALP and LGPSSSPAPTG. Disordered regions lie at residues 461–515 and 546–574; these read LGPG…GASV and RRPTAPSTPDSSRPDPGVPLEDAPAPAGS.

It belongs to the membralin family. As to quaternary structure, interacts with ERLIN2. In terms of tissue distribution, detected in brain, spinal cord, lung, liver and kidney.

The protein resides in the endoplasmic reticulum membrane. May have a role in the ERAD pathway required for clearance of misfolded proteins in the endoplasmic reticulum (ER). Promotes survival of motor neurons, probably by protecting against ER stress. The polypeptide is Membralin (Tmem259) (Mus musculus (Mouse)).